A 335-amino-acid polypeptide reads, in one-letter code: Fructose-1,6-bisphosphatase class 1 (335 aa).

Residues E92, D114, L116, and D117 each contribute to the Mg(2+) site. Substrate-binding positions include 117–120 (DGSS), N209, and K275. Mg(2+) is bound at residue E281.

This sequence belongs to the FBPase class 1 family. Homotetramer. Requires Mg(2+) as cofactor.

It localises to the cytoplasm. It catalyses the reaction beta-D-fructose 1,6-bisphosphate + H2O = beta-D-fructose 6-phosphate + phosphate. It functions in the pathway carbohydrate biosynthesis; gluconeogenesis. This chain is Fructose-1,6-bisphosphatase class 1, found in Delftia acidovorans (strain DSM 14801 / SPH-1).